Here is a 479-residue protein sequence, read N- to C-terminus: HSPB1-associated protein 1 (479 aa).

A disordered region spans residues 1-25 (MEAGCEGSSPQTLGERTMGEEGERV). The interaction with HSPB1 stretch occupies residues 88–208 (ETECSYVDAT…EDTPFLYPTR (121 aa)). Residues 124-288 (WAYADYKYFV…HLARVEEAVT (165 aa)) form the JmjC domain. Positions 347-412 (PRANGEEPGV…GDSQECTSRN (66 aa)) are disordered. The segment covering 356 to 369 (VQEHMEVEQARDPS) has biased composition (basic and acidic residues).

In terms of assembly, interacts with CRYAB and HSPB1. As to expression, widely expressed. Highly expressed by Sertoli cells in testis (at protein level).

It is found in the cytoplasm. Its function is as follows. May play a role in cellular stress response. In Rattus norvegicus (Rat), this protein is HSPB1-associated protein 1 (Hspbap1).